Here is a 277-residue protein sequence, read N- to C-terminus: Shikimate dehydrogenase (NADP(+)) (277 aa).

Residues 15-17 (SLS) and Thr-62 contribute to the shikimate site. Residue Lys-66 is the Proton acceptor of the active site. Residues Asn-87 and Asp-102 each contribute to the shikimate site. NADP(+) contacts are provided by residues 127–131 (GAGGA), 151–156 (NRTVDK), and Ile-219. Tyr-221 contributes to the shikimate binding site. Gly-242 is an NADP(+) binding site.

It belongs to the shikimate dehydrogenase family. In terms of assembly, homodimer.

The enzyme catalyses shikimate + NADP(+) = 3-dehydroshikimate + NADPH + H(+). Its pathway is metabolic intermediate biosynthesis; chorismate biosynthesis; chorismate from D-erythrose 4-phosphate and phosphoenolpyruvate: step 4/7. In terms of biological role, involved in the biosynthesis of the chorismate, which leads to the biosynthesis of aromatic amino acids. Catalyzes the reversible NADPH linked reduction of 3-dehydroshikimate (DHSA) to yield shikimate (SA). This Bacillus cereus (strain ZK / E33L) protein is Shikimate dehydrogenase (NADP(+)).